A 121-amino-acid chain; its full sequence is Chromosome transmission fidelity protein 8 homolog (121 aa).

It belongs to the CTF8 family. As to quaternary structure, component of the CTF18-RFC complex, which consists of CTF18, CTF8, DSCC1, RFC2, RFC3, RFC4 and RFC5. The CTF18-RFC complex does not interact with the Rad9/Rad1/Hus1 complex. The CTF18-RFC complex interacts with POLH. CTF18/CTF8/DSCC1 associate with PCNA. CTF8 exists as a dimer with DSCC1.

The protein localises to the nucleus. In terms of biological role, chromosome cohesion factor involved in sister chromatid cohesion and fidelity of chromosome transmission. Component of one of the cell nuclear antigen loader complexes, CTF18-replication factor C (CTF18-RFC), which consists of CTF18, CTF8, DSCC1, RFC2, RFC3, RFC4 and RFC5. The CTF18-RFC complex binds to single-stranded and primed DNAs and has weak ATPase activity that is stimulated the presence of primed DNA, replication protein A (RPA) and proliferating cell nuclear antigen (PCNA). The CTF18-RFC complex catalyzes the ATP-dependent loading of PCNA onto primed and gapped DNA. It also interacts with and stimulates POLH, which is suggestive of a protein network that coordinates DNA repair, recombination and chromosome cohesion reactions with replication fork progression. The sequence is that of Chromosome transmission fidelity protein 8 homolog from Rattus norvegicus (Rat).